The sequence spans 224 residues: Glutathione S-transferase U4 (224 aa).

Positions 6–85 (EDVKLLGFWA…YIDQIWKNNP (80 aa)) constitute a GST N-terminal domain. Glutathione-binding positions include 16–17 (SP), 42–43 (NK), 56–57 (KV), and 69–70 (ES). A GST C-terminal domain is found at 90 to 217 (DPYEKAMALF…EEQIEHMKKV (128 aa)). A Phosphothreonine modification is found at threonine 151.

This sequence belongs to the GST superfamily. Tau family.

It is found in the cytoplasm. It localises to the cytosol. The catalysed reaction is RX + glutathione = an S-substituted glutathione + a halide anion + H(+). Functionally, may be involved in the conjugation of reduced glutathione to a wide number of exogenous and endogenous hydrophobic electrophiles and have a detoxification role against certain herbicides. The protein is Glutathione S-transferase U4 (GSTU4) of Arabidopsis thaliana (Mouse-ear cress).